Reading from the N-terminus, the 75-residue chain is Bacteriocin lactacin-F subunit LafA (75 aa).

The propeptide occupies 1 to 18; the sequence is MKQFNYLSHKDLAVVVGG.

It belongs to the bacteriocin class IIB family. This bacteriocin depends upon the complementation of two peptides for activity: LafA and LafX. Associated with a 180 kDa bacteriocin complex.

In terms of biological role, heat stable bacteriocin active against Enterococcus faecalis and other Lactobacilli. The polypeptide is Bacteriocin lactacin-F subunit LafA (lafA) (Lactobacillus johnsonii (strain CNCM I-12250 / La1 / NCC 533)).